The following is a 243-amino-acid chain: 1-(5-phosphoribosyl)-5-[(5-phosphoribosylamino)methylideneamino] imidazole-4-carboxamide isomerase (243 aa).

The active-site Proton acceptor is the aspartate 9. Catalysis depends on aspartate 131, which acts as the Proton donor.

Belongs to the HisA/HisF family.

The protein resides in the cytoplasm. The catalysed reaction is 1-(5-phospho-beta-D-ribosyl)-5-[(5-phospho-beta-D-ribosylamino)methylideneamino]imidazole-4-carboxamide = 5-[(5-phospho-1-deoxy-D-ribulos-1-ylimino)methylamino]-1-(5-phospho-beta-D-ribosyl)imidazole-4-carboxamide. The protein operates within amino-acid biosynthesis; L-histidine biosynthesis; L-histidine from 5-phospho-alpha-D-ribose 1-diphosphate: step 4/9. This Campylobacter jejuni (strain RM1221) protein is 1-(5-phosphoribosyl)-5-[(5-phosphoribosylamino)methylideneamino] imidazole-4-carboxamide isomerase.